Here is a 122-residue protein sequence, read N- to C-terminus: Large ribosomal subunit protein bL12 (122 aa).

It belongs to the bacterial ribosomal protein bL12 family. As to quaternary structure, homodimer. Part of the ribosomal stalk of the 50S ribosomal subunit. Forms a multimeric L10(L12)X complex, where L10 forms an elongated spine to which 2 to 4 L12 dimers bind in a sequential fashion. Binds GTP-bound translation factors.

Forms part of the ribosomal stalk which helps the ribosome interact with GTP-bound translation factors. Is thus essential for accurate translation. The protein is Large ribosomal subunit protein bL12 of Xylella fastidiosa (strain 9a5c).